The primary structure comprises 233 residues: C-type lectin domain family 2 member D6 (233 aa).

A disordered region spans residues 1–45; that stretch reads MPSSAHLQDSPPLLSRTLTQNEGQTSLRQSSSCGPSATSASESLS. Topologically, residues 1–73 are cytoplasmic; sequence MPSSAHLQDS…GIILPESPAK (73 aa). Residues 16–29 show a composition bias toward polar residues; sequence RTLTQNEGQTSLRQ. Over residues 30–43 the composition is skewed to low complexity; it reads SSSCGPSATSASES. Residues 74–94 traverse the membrane as a helical; Signal-anchor for type II membrane protein segment; the sequence is LLCCCAVIVVLSVAVVALSVA. Topologically, residues 95–233 are extracellular; sequence LSVKKTPQIS…KLNSYTSQCQ (139 aa). The C-type lectin domain occupies 119–230; that stretch reads VGNKCYYFNE…ICSKLNSYTS (112 aa). The N-linked (GlcNAc...) asparagine glycan is linked to N132.

The protein localises to the cell membrane. In terms of biological role, lectin-type cell surface receptor. This chain is C-type lectin domain family 2 member D6 (Clec2d6), found in Rattus norvegicus (Rat).